Reading from the N-terminus, the 307-residue chain is Metapyrocatechase (307 aa).

2 consecutive VOC domains span residues 7 to 122 and 150 to 269; these read RPGH…LYAD and RFDH…VFCG. Residues His-153, His-214, and Glu-265 each coordinate Fe cation.

Belongs to the extradiol ring-cleavage dioxygenase family. Homotetramer. It depends on Fe(2+) as a cofactor.

The catalysed reaction is catechol + O2 = (2Z,4E)-2-hydroxy-6-oxohexa-2,4-dienoate + H(+). The protein operates within xenobiotic degradation; toluene degradation. The protein is Metapyrocatechase (xylE) of Pseudomonas putida (Arthrobacter siderocapsulatus).